Consider the following 158-residue polypeptide: MARFHNPAERPYKLPDLCTTLDTTLQDITIACVYCRRPLQQTEVYEFAFSDLYVVYRDGEPLAACQSCIKFYAKIRELRYYSDSVYATTLENITNTKLYNLLIRCMCCLKPLCPAEKLRHLNSKRRFHKIAGSYTGQCRRCWTTKREDRRLTRRETQV.

2 zinc fingers span residues 32–68 (CVYCRRPLQQTEVYEFAFSDLYVVYRDGEPLAACQSC) and 105–141 (CMCCLKPLCPAEKLRHLNSKRRFHKIAGSYTGQCRRC). The short motif at 156–158 (TQV) is the PDZ-binding domain element.

The protein belongs to the papillomaviridae E6 protein family. In terms of assembly, forms homodimers. Interacts with ubiquitin-protein ligase UBE3A/E6-AP and thus forms a complex with human TP53. Interacts with human NFX1 and MAGI3. Interacts with human IRF3; this interaction inhibits the establishment of antiviral state. Interacts with human TYK2; this interaction inhibits JAK-STAT activation by interferon alpha. Interacts with host DLG1; this interaction leads to the proteasomal degradation of DLG1.

It localises to the host cytoplasm. The protein resides in the host nucleus. Functionally, this protein may be involved in the oncogenic potential of this virus (cervical neoplasia-associated virus). Its function is as follows. Plays a major role in the induction and maintenance of cellular transformation. Acts mainly as an oncoprotein by stimulating the destruction of many host cell key regulatory proteins. E6 associates with host UBE3A/E6-AP ubiquitin-protein ligase, and inactivates tumor suppressors TP53 and TP73 by targeting them to the 26S proteasome for degradation. In turn, DNA damage and chromosomal instabilities increase and lead to cell proliferation and cancer development. The complex E6/E6AP targets several other substrates to degradation via the proteasome including host DLG1 or NFX1, a repressor of human telomerase reverse transcriptase (hTERT). The resulting increased expression of hTERT prevents the shortening of telomere length leading to cell immortalization. Other cellular targets including BAK1, Fas-associated death domain-containing protein (FADD) and procaspase 8, are degraded by E6/E6AP causing inhibition of apoptosis. E6 also inhibits immune response by interacting with host IRF3 and TYK2. These interactions prevent IRF3 transcriptional activities and inhibit TYK2-mediated JAK-STAT activation by interferon alpha resulting in inhibition of the interferon signaling pathway. The sequence is that of Protein E6 from Homo sapiens (Human).